Reading from the N-terminus, the 251-residue chain is Ubiquinone/menaquinone biosynthesis C-methyltransferase UbiE (251 aa).

S-adenosyl-L-methionine is bound by residues Thr74, Asp95, and 123-124; that span reads NA.

This sequence belongs to the class I-like SAM-binding methyltransferase superfamily. MenG/UbiE family.

The enzyme catalyses a 2-demethylmenaquinol + S-adenosyl-L-methionine = a menaquinol + S-adenosyl-L-homocysteine + H(+). It carries out the reaction a 2-methoxy-6-(all-trans-polyprenyl)benzene-1,4-diol + S-adenosyl-L-methionine = a 5-methoxy-2-methyl-3-(all-trans-polyprenyl)benzene-1,4-diol + S-adenosyl-L-homocysteine + H(+). It functions in the pathway quinol/quinone metabolism; menaquinone biosynthesis; menaquinol from 1,4-dihydroxy-2-naphthoate: step 2/2. Its pathway is cofactor biosynthesis; ubiquinone biosynthesis. In terms of biological role, methyltransferase required for the conversion of demethylmenaquinol (DMKH2) to menaquinol (MKH2) and the conversion of 2-polyprenyl-6-methoxy-1,4-benzoquinol (DDMQH2) to 2-polyprenyl-3-methyl-6-methoxy-1,4-benzoquinol (DMQH2). The sequence is that of Ubiquinone/menaquinone biosynthesis C-methyltransferase UbiE from Shewanella pealeana (strain ATCC 700345 / ANG-SQ1).